Here is a 91-residue protein sequence, read N- to C-terminus: DNA-directed RNA polymerase subunit omega (91 aa).

The protein belongs to the RNA polymerase subunit omega family. The RNAP catalytic core consists of 2 alpha, 1 beta, 1 beta' and 1 omega subunit. When a sigma factor is associated with the core the holoenzyme is formed, which can initiate transcription.

It catalyses the reaction RNA(n) + a ribonucleoside 5'-triphosphate = RNA(n+1) + diphosphate. Promotes RNA polymerase assembly. Latches the N- and C-terminal regions of the beta' subunit thereby facilitating its interaction with the beta and alpha subunits. The polypeptide is DNA-directed RNA polymerase subunit omega (Yersinia pestis bv. Antiqua (strain Antiqua)).